The primary structure comprises 231 residues: MRLLFFLLITLLFAACSSTPKVHQPKHSSKTEKDLGIGLSPTPPPNERIPGEKSRAMLMEMEGREIPVRIPDANASKIDKNVSNPISIMSSSGGLLTLWALKPRNWVWGYTPIDSFEFGRAKFWRIISFSNGQVIIKNMQEGTCLQAYGNGVIHDICDSKNQAQLWNLNFFDNQAIQIQSVSAKTCLQTPTVRTTTYYSIYLTKCATSSNLDQQWYITPVALEPEPIFFIK.

A signal peptide spans 1-15; the sequence is MRLLFFLLITLLFAA. The N-palmitoyl cysteine moiety is linked to residue cysteine 16. The S-diacylglycerol cysteine moiety is linked to residue cysteine 16. The segment at 20–51 is disordered; sequence PKVHQPKHSSKTEKDLGIGLSPTPPPNERIPG. A mediates binding to target cells region spans residues 99-110; it reads WALKPRNWVWGY. The Ricin B-type lectin domain maps to 130-217; that stretch reads SNGQVIIKNM…SSNLDQQWYI (88 aa).

As to quaternary structure, heterotrimer of 3 subunits, CdtA, CdtB and CdtC.

The protein localises to the cell outer membrane. Its function is as follows. CDTs are cytotoxins which induce cell distension, growth arrest in G2/M phase, nucleus swelling, and chromatin fragmentation in HeLa cells. This Helicobacter hepaticus (strain ATCC 51449 / 3B1) protein is Cytolethal distending toxin subunit A (cdtA).